A 476-amino-acid chain; its full sequence is MGRTLAEKVWDDHVVRRAEGEPDLLFIDLHLLHEVTSPQAFDGLRKSGRPVRRLDLTIATEDHNTPTLDIDKPIADPVSRAQLETLRKNCADFGVRLHPLGDVEQGVVHVVGPQLGLTQPGTTVVCGDSHTSTHGAFGALAFGIGTSQVEHVLATQTLPLARPKTMAITVDGELPEGVTAKDLILAIIARIGTGGGQGYILEYRGEAIEKLSMEARMTICNMSIEAGARAGMIAPDETTFAYLQGRPHAPEGADWDAAVEYWKTLRTDDDAEFDAEVVIEAAELAPFVTWGTNPGQGAPLSAAVPDPASYEDASERFAAEKALEYMGLEAGQPLRSIQVDTVFVGSCTNGRIEDLRAAAEIVRDRKVADGVRMLVVPGSARVGLQAVSEGLDVVFKEAGAEWRHAGCSMCLGMNPDQLAPGERSASTSNRNFEGRQGKGGRTHLVSPQVAAATAVLGHLASPADLSAADVPTPAGV.

Residues cysteine 347, cysteine 407, and cysteine 410 each contribute to the [4Fe-4S] cluster site. Positions 418–442 (LAPGERSASTSNRNFEGRQGKGGRT) are disordered.

The protein belongs to the aconitase/IPM isomerase family. LeuC type 1 subfamily. As to quaternary structure, heterodimer of LeuC and LeuD. It depends on [4Fe-4S] cluster as a cofactor.

It catalyses the reaction (2R,3S)-3-isopropylmalate = (2S)-2-isopropylmalate. It functions in the pathway amino-acid biosynthesis; L-leucine biosynthesis; L-leucine from 3-methyl-2-oxobutanoate: step 2/4. Its function is as follows. Catalyzes the isomerization between 2-isopropylmalate and 3-isopropylmalate, via the formation of 2-isopropylmaleate. The polypeptide is 3-isopropylmalate dehydratase large subunit (Streptomyces coelicolor (strain ATCC BAA-471 / A3(2) / M145)).